An 862-amino-acid polypeptide reads, in one-letter code: Protein JOKA2 (862 aa).

In terms of domain architecture, PB1 spans 6–90 (SIVIKVKYEE…NPLRISARLN (85 aa)). The span at 92 to 106 (GERSGRASARSSGNS) shows a compositional bias: low complexity. Disordered regions lie at residues 92 to 117 (GERS…VQPP), 194 to 234 (KGNT…ASNE), and 295 to 345 (VRNS…DSSG). Polar residues predominate over residues 325-345 (SASSSKVKQCNWDSPNADSSG). Residues 442-492 (HKGVRCDGCGVHPITGPRFISKVKENYDLCSICFAEMGNDADYIRMDRPLT) form a ZZ-type; degenerate zinc finger. Zn(2+) contacts are provided by cysteine 447, cysteine 450, cysteine 471, and cysteine 474. The region spanning 811 to 860 (SVDDLCGVAEWDPILEELKEMGFCDKEMNKKLLKKNNGSIKRVVMDLIAG) is the UBA domain. The ATG8 interacting motif (AIM) motif lies at 817 to 824 (GVAEWDPI).

As to quaternary structure, interacts (via C-terminal AIM motif) with ATG8CL.

The protein resides in the vacuole. Its subcellular location is the cytoplasmic vesicle. It is found in the autophagosome. Functionally, autophagic substrate that functions as a host autophagy cargo receptor. Requires ATG8 protein expression to be recognized as an autophagic substrate. Activates ATG8CL-mediated selective autophagy, and contributes to defense against the fungal pathogen Phytophtora infestans. In Solanum tuberosum (Potato), this protein is Protein JOKA2.